The primary structure comprises 107 residues: Universal stress protein B homolog (107 aa).

2 consecutive transmembrane segments (helical) span residues 6-23 (TILF…ARYF) and 89-106 (LFIL…SSFI).

It belongs to the universal stress protein B family.

Its subcellular location is the cell inner membrane. In Vibrio atlanticus (strain LGP32) (Vibrio splendidus (strain Mel32)), this protein is Universal stress protein B homolog.